The primary structure comprises 215 residues: N-(5'-phosphoribosyl)anthranilate isomerase (215 aa).

It belongs to the TrpF family.

It catalyses the reaction N-(5-phospho-beta-D-ribosyl)anthranilate = 1-(2-carboxyphenylamino)-1-deoxy-D-ribulose 5-phosphate. It participates in amino-acid biosynthesis; L-tryptophan biosynthesis; L-tryptophan from chorismate: step 3/5. The polypeptide is N-(5'-phosphoribosyl)anthranilate isomerase (Chlorobium phaeobacteroides (strain DSM 266 / SMG 266 / 2430)).